The primary structure comprises 130 residues: Protein ApaG (130 aa).

Residues 3 to 127 enclose the ApaG domain; sequence STITRDIQIT…FSLDSPFSRQ (125 aa).

The polypeptide is Protein ApaG (Beijerinckia indica subsp. indica (strain ATCC 9039 / DSM 1715 / NCIMB 8712)).